A 446-amino-acid chain; its full sequence is Glycogen synthase (446 aa).

Arginine 15 serves as a coordination point for ADP-alpha-D-glucose.

The protein belongs to the glycosyltransferase 1 family. Bacterial/plant glycogen synthase subfamily.

It carries out the reaction [(1-&gt;4)-alpha-D-glucosyl](n) + ADP-alpha-D-glucose = [(1-&gt;4)-alpha-D-glucosyl](n+1) + ADP + H(+). The protein operates within glycan biosynthesis; glycogen biosynthesis. In terms of biological role, synthesizes alpha-1,4-glucan chains using ADP-glucose. In Deinococcus deserti (strain DSM 17065 / CIP 109153 / LMG 22923 / VCD115), this protein is Glycogen synthase.